The following is a 123-amino-acid chain: Large ribosomal subunit protein bL17 (123 aa).

Belongs to the bacterial ribosomal protein bL17 family. As to quaternary structure, part of the 50S ribosomal subunit. Contacts protein L32.

The polypeptide is Large ribosomal subunit protein bL17 (Mycoplasma genitalium (strain ATCC 33530 / DSM 19775 / NCTC 10195 / G37) (Mycoplasmoides genitalium)).